The chain runs to 629 residues: 1-deoxy-D-xylulose-5-phosphate synthase (629 aa).

Residues His-78 and 119–121 (AHS) each bind thiamine diphosphate. Asp-150 provides a ligand contact to Mg(2+). Thiamine diphosphate is bound by residues 151–152 (GA), Asn-179, Tyr-286, and Glu-368. A Mg(2+)-binding site is contributed by Asn-179.

This sequence belongs to the transketolase family. DXPS subfamily. In terms of assembly, homodimer. The cofactor is Mg(2+). Requires thiamine diphosphate as cofactor.

It carries out the reaction D-glyceraldehyde 3-phosphate + pyruvate + H(+) = 1-deoxy-D-xylulose 5-phosphate + CO2. It functions in the pathway metabolic intermediate biosynthesis; 1-deoxy-D-xylulose 5-phosphate biosynthesis; 1-deoxy-D-xylulose 5-phosphate from D-glyceraldehyde 3-phosphate and pyruvate: step 1/1. Its function is as follows. Catalyzes the acyloin condensation reaction between C atoms 2 and 3 of pyruvate and glyceraldehyde 3-phosphate to yield 1-deoxy-D-xylulose-5-phosphate (DXP). The polypeptide is 1-deoxy-D-xylulose-5-phosphate synthase (Acidovorax sp. (strain JS42)).